The following is a 451-amino-acid chain: mRNA cleavage and polyadenylation factor CLP1 (451 aa).

ATP-binding positions include E33, K72, and 133–138; that span reads NTGKTA.

It belongs to the Clp1 family. Clp1 subfamily. Component of a pre-mRNA cleavage factor complex. Interacts directly with PCF11.

The protein localises to the nucleus. Required for endonucleolytic cleavage during polyadenylation-dependent pre-mRNA 3'-end formation. This is mRNA cleavage and polyadenylation factor CLP1 from Vanderwaltozyma polyspora (strain ATCC 22028 / DSM 70294 / BCRC 21397 / CBS 2163 / NBRC 10782 / NRRL Y-8283 / UCD 57-17) (Kluyveromyces polysporus).